The primary structure comprises 179 residues: uncharacterized protein (179 aa).

The interval Met-1–Arg-32 is disordered.

This is an uncharacterized protein from Homo sapiens (Human).